Consider the following 168-residue polypeptide: NADH-quinone oxidoreductase subunit I (168 aa).

4Fe-4S ferredoxin-type domains follow at residues 58-88 (LRTY…IEAQ) and 99-128 (VRYD…EGPN). [4Fe-4S] cluster contacts are provided by Cys-68, Cys-71, Cys-74, Cys-78, Cys-108, Cys-111, Cys-114, and Cys-118.

The protein belongs to the complex I 23 kDa subunit family. NDH-1 is composed of 14 different subunits. Subunits NuoA, H, J, K, L, M, N constitute the membrane sector of the complex. [4Fe-4S] cluster serves as cofactor.

The protein localises to the cell inner membrane. It catalyses the reaction a quinone + NADH + 5 H(+)(in) = a quinol + NAD(+) + 4 H(+)(out). Functionally, NDH-1 shuttles electrons from NADH, via FMN and iron-sulfur (Fe-S) centers, to quinones in the respiratory chain. The immediate electron acceptor for the enzyme in this species is believed to be ubiquinone. Couples the redox reaction to proton translocation (for every two electrons transferred, four hydrogen ions are translocated across the cytoplasmic membrane), and thus conserves the redox energy in a proton gradient. In Ehrlichia ruminantium (strain Gardel), this protein is NADH-quinone oxidoreductase subunit I.